The chain runs to 127 residues: Nuclear transport factor 2 (127 aa).

Positions 11-124 (VGKQFVEHYY…FLLINDFFRL (114 aa)) constitute an NTF2 domain.

It is found in the cytoplasm. The protein localises to the cytosol. It localises to the nucleus outer membrane. Its subcellular location is the nucleus. The protein resides in the nuclear pore complex. It is found in the nucleus inner membrane. The protein localises to the nucleoplasm. Mediates the import of GDP-bound RAN from the cytoplasm into the nucleus which is essential for the function of RAN in cargo receptor-mediated nucleocytoplasmic transport. Thereby, plays indirectly a more general role in cargo receptor-mediated nucleocytoplasmic transport. Interacts with GDP-bound RAN in the cytosol, recruits it to the nuclear pore complex via its interaction with nucleoporins and promotes its nuclear import. The polypeptide is Nuclear transport factor 2 (Dictyostelium discoideum (Social amoeba)).